The sequence spans 699 residues: Serine/threonine-protein kinase PRR2 (699 aa).

The interval 168-193 (SSTKKNLANDISDNKHNNNSSNTIGH) is disordered. Positions 184–193 (NNNSSNTIGH) are enriched in polar residues. Residues 361–653 (RDLDVVLGEG…INGILQDGWI (293 aa)) form the Protein kinase domain. ATP-binding positions include 367–375 (LGEGSGGKV) and Lys-390. Asp-484 acts as the Proton acceptor in catalysis.

The protein belongs to the protein kinase superfamily. Ser/Thr protein kinase family.

The enzyme catalyses L-seryl-[protein] + ATP = O-phospho-L-seryl-[protein] + ADP + H(+). The catalysed reaction is L-threonyl-[protein] + ATP = O-phospho-L-threonyl-[protein] + ADP + H(+). Its function is as follows. Protein kinase that functions as a regulator in the pheromone-induced mating pathway downstream of mitogen-activated protein kinase (MAPK) FUS3. Diminishes transcriptional induction of genes in response to pheromone signaling. The chain is Serine/threonine-protein kinase PRR2 (PRR2) from Saccharomyces cerevisiae (strain ATCC 204508 / S288c) (Baker's yeast).